We begin with the raw amino-acid sequence, 405 residues long: Argininosuccinate synthase (405 aa).

ATP contacts are provided by residues 10–18 (AFSGGLDTS) and Ala37. Positions 90 and 95 each coordinate L-citrulline. Residue Gly120 participates in ATP binding. 3 residues coordinate L-aspartate: Thr122, Asn126, and Asp127. Residue Asn126 coordinates L-citrulline. L-citrulline is bound by residues Arg130, Ser181, Ser190, Glu266, and Tyr278.

Belongs to the argininosuccinate synthase family. Type 1 subfamily. Homotetramer.

The protein resides in the cytoplasm. The catalysed reaction is L-citrulline + L-aspartate + ATP = 2-(N(omega)-L-arginino)succinate + AMP + diphosphate + H(+). Its pathway is amino-acid biosynthesis; L-arginine biosynthesis; L-arginine from L-ornithine and carbamoyl phosphate: step 2/3. This Rhizorhabdus wittichii (strain DSM 6014 / CCUG 31198 / JCM 15750 / NBRC 105917 / EY 4224 / RW1) (Sphingomonas wittichii) protein is Argininosuccinate synthase.